We begin with the raw amino-acid sequence, 361 residues long: 5-formaminoimidazole-4-carboxamide-1-(beta)-D-ribofuranosyl 5'-monophosphate synthetase (361 aa).

5-amino-1-(5-phospho-beta-D-ribosyl)imidazole-4-carboxamide contacts are provided by H27 and S94. An ATP-grasp domain is found at 116-348 (RRILRWESER…MGQRIAREIK (233 aa)). Residues 156-166 (KFPGARGGRGY), 199-202 (EEYV), and E230 each bind ATP. Position 258 (N258) interacts with 5-amino-1-(5-phospho-beta-D-ribosyl)imidazole-4-carboxamide. Residues Q297 and E310 each coordinate Mg(2+).

Belongs to the phosphohexose mutase family. In terms of assembly, homohexamer. Dimer of trimers. Mg(2+) is required as a cofactor. Mn(2+) serves as cofactor.

It catalyses the reaction 5-amino-1-(5-phospho-beta-D-ribosyl)imidazole-4-carboxamide + formate + ATP = 5-formamido-1-(5-phospho-D-ribosyl)imidazole-4-carboxamide + ADP + phosphate. It participates in purine metabolism; IMP biosynthesis via de novo pathway; 5-formamido-1-(5-phospho-D-ribosyl)imidazole-4-carboxamide from 5-amino-1-(5-phospho-D-ribosyl)imidazole-4-carboxamide (formate route): step 1/1. Its activity is regulated as follows. Inhibited by ADP. Its function is as follows. Catalyzes the ATP- and formate-dependent formylation of 5-aminoimidazole-4-carboxamide-1-beta-d-ribofuranosyl 5'-monophosphate (AICAR) to 5-formaminoimidazole-4-carboxamide-1-beta-d-ribofuranosyl 5'-monophosphate (FAICAR) in the absence of folates. The polypeptide is 5-formaminoimidazole-4-carboxamide-1-(beta)-D-ribofuranosyl 5'-monophosphate synthetase (Methanocaldococcus jannaschii (strain ATCC 43067 / DSM 2661 / JAL-1 / JCM 10045 / NBRC 100440) (Methanococcus jannaschii)).